Here is a 316-residue protein sequence, read N- to C-terminus: Pentatricopeptide repeat-containing protein At1g19525 (316 aa).

PPR repeat units lie at residues 9–43 (DILT…GLRP), 44–78 (DEKI…ELKA), 79–113 (SEEV…SDGP), 115–149 (SFEA…GHKP), 150–184 (DDKC…GIEI), and 185–219 (GVIT…GEAP).

It belongs to the PPR family. P subfamily.

The protein is Pentatricopeptide repeat-containing protein At1g19525 of Arabidopsis thaliana (Mouse-ear cress).